We begin with the raw amino-acid sequence, 129 residues long: Phosphoribosyl-AMP cyclohydrolase (129 aa).

A Mg(2+)-binding site is contributed by Asp-87. Cys-88 is a Zn(2+) binding site. Mg(2+) is bound by residues Asp-89 and Asp-91. 2 residues coordinate Zn(2+): Cys-104 and Cys-111.

Belongs to the PRA-CH family. In terms of assembly, homodimer. It depends on Mg(2+) as a cofactor. Zn(2+) serves as cofactor.

The protein resides in the cytoplasm. It carries out the reaction 1-(5-phospho-beta-D-ribosyl)-5'-AMP + H2O = 1-(5-phospho-beta-D-ribosyl)-5-[(5-phospho-beta-D-ribosylamino)methylideneamino]imidazole-4-carboxamide. The protein operates within amino-acid biosynthesis; L-histidine biosynthesis; L-histidine from 5-phospho-alpha-D-ribose 1-diphosphate: step 3/9. Its function is as follows. Catalyzes the hydrolysis of the adenine ring of phosphoribosyl-AMP. This chain is Phosphoribosyl-AMP cyclohydrolase, found in Ruegeria sp. (strain TM1040) (Silicibacter sp.).